Consider the following 586-residue polypeptide: Chaperone protein HscA homolog (586 aa).

It belongs to the heat shock protein 70 family.

Its function is as follows. Chaperone involved in the maturation of iron-sulfur cluster-containing proteins. Has a low intrinsic ATPase activity which is markedly stimulated by HscB. This Rickettsia typhi (strain ATCC VR-144 / Wilmington) protein is Chaperone protein HscA homolog.